A 229-amino-acid polypeptide reads, in one-letter code: Probable ribonuclease H (229 aa).

An RNase H type-1 domain is found at 42–164; sequence LQDISLEFDK…ADFLANSAAK (123 aa). 3 residues coordinate a divalent metal cation: glutamate 60, aspartate 87, and aspartate 156.

This sequence belongs to the RNase H family. It depends on a divalent metal cation as a cofactor.

It carries out the reaction Endonucleolytic cleavage to 5'-phosphomonoester.. In terms of biological role, endonuclease that specifically degrades the RNA of RNA-DNA hybrids. The chain is Probable ribonuclease H (RNH1) from Acanthamoeba polyphaga mimivirus (APMV).